The chain runs to 479 residues: MSLKTAPVIVWFRKDLRLSDNLALLAAVEHGGPVIPVYIREKSAGPLGGAQEWWLHHSLAALSSSLEKAGGRLVLASGDAERILRDLISETGADTVVWNRRYDPTGMATDKALKQKLRDDGLTVRSFSGQLLHEPSRLQTKSGGPYRVYTPFWRALEGSDEPHAPADPPKSLTAPKVWPKSEKLSNWKLLPTKPDWAKDFSDIWTPGETGALDKLDDFIDGALKGYEEGRDFPAKPATSLLSPHLAAGEISPAAVWHATKGLSRHIASNDISRFRKEIVWREFCYHLLFHFPELGEKNWNDSFDAFSWRDDEKSFKAWTRGMTGYPIVDAGMRQLWQHGTMHNRVRMIVASFLIKHLLIDWRKGEKWFRDTLVDADPASNAANWQWVAGSGADASPFFRIFNPILQGEKFDGDGDYVRRFVPELEKLERKYIHKPFEAPKDALKKAGVELGKTYPLPIVDHGKARERALAAYAAVKKTT.

In terms of domain architecture, Photolyase/cryptochrome alpha/beta spans 6–132 (APVIVWFRKD…TVRSFSGQLL (127 aa)). Tyrosine 226 serves as a coordination point for FAD. Arginine 230 contributes to the DNA binding site. FAD-binding positions include 238–242 (TSLLS) and 277–284 (EIVWREFC). Interaction with DNA regions lie at residues 277–284 (EIVWREFC) and 343–344 (NR). 374–376 (DAD) serves as a coordination point for FAD. A DNA-binding site is contributed by glutamine 406.

This sequence belongs to the DNA photolyase class-3 family. Requires FAD as cofactor. The cofactor is (6R)-5,10-methylene-5,6,7,8-tetrahydrofolate.

It carries out the reaction cyclobutadipyrimidine (in DNA) = 2 pyrimidine residues (in DNA).. Functionally, photolyase involved in the repair of UV radiation-induced DNA damage. By using blue-light energy, catalyzes the photoreactivation of cyclobutane pyrimidine dimers (CPDs), which are formed between adjacent bases on the same DNA strand upon exposure to ultraviolet radiation. Can repair CPD lesions in ssDNA as well as in dsDNA. This is Deoxyribodipyrimidine photo-lyase from Agrobacterium fabrum (strain C58 / ATCC 33970) (Agrobacterium tumefaciens (strain C58)).